Reading from the N-terminus, the 245-residue chain is Acetylglutamate kinase (245 aa).

Substrate-binding positions include 41-42 (GG), R63, and N156.

It belongs to the acetylglutamate kinase family. ArgB subfamily.

Its subcellular location is the cytoplasm. The catalysed reaction is N-acetyl-L-glutamate + ATP = N-acetyl-L-glutamyl 5-phosphate + ADP. It functions in the pathway amino-acid biosynthesis; L-arginine biosynthesis; N(2)-acetyl-L-ornithine from L-glutamate: step 2/4. Its function is as follows. Catalyzes the ATP-dependent phosphorylation of N-acetyl-L-glutamate. The sequence is that of Acetylglutamate kinase from Leuconostoc citreum (strain KM20).